The sequence spans 652 residues: Protein high chlorophyll fluorescent 107 (652 aa).

2 disordered regions span residues Met1 to Ser21 and Val78 to Lys121. The N-terminal 68 residues, Met1–Tyr68, are a transit peptide targeting the chloroplast. Residues Pro105–Lys121 show a composition bias toward basic and acidic residues. TPR repeat units lie at residues Leu168–Asp201, Gly202–Glu235, Ser237–His270, Val271–Asn304, Glu305–Ser338, Cys339–Asn372, Phe374–Asp406, Pro407–His440, Gln441–Thr474, Ser478–Ser511, Thr543–Asn576, and Gln598–Lys631. Residues Leu585 to Glu610 are disordered.

May form homomultimers. Part of a multi-subunit complex in the range of 60-190 and 600-800 kDa in chloroplast membranes.

It localises to the plastid. The protein localises to the chloroplast. It is found in the chloroplast membrane. The protein resides in the chloroplast stroma. In terms of biological role, involved, directly or indirectly, in the processing of chloroplast encoded mRNAs. Exhibits sequence-specific RNA binding and RNA remodeling activities, probably leading to the activation of translation of the target gene cluster psbB-psbT-psbH-petB-petD. Blocks 5'-3' and 3'-5' exoribonucleases (e.g. polynucleotide phosphorylase (PNPase), RNase R) in vitro. Necessary for intercistronic RNA processing of the psbH 5' untranslated region or the stabilization of 5' processed psbH RNAs. Also required for the synthesis of psbB. In Arabidopsis thaliana (Mouse-ear cress), this protein is Protein high chlorophyll fluorescent 107.